The sequence spans 443 residues: Ribulose bisphosphate carboxylase large chain (443 aa).

Positions 89 and 139 each coordinate substrate. The active-site Proton acceptor is the Lys141. Lys143 contributes to the substrate binding site. Positions 167, 169, and 170 each coordinate Mg(2+). The residue at position 167 (Lys167) is an N6-carboxylysine. His260 (proton acceptor) is an active-site residue. Residues Arg261, His293, and Ser345 each coordinate substrate.

This sequence belongs to the RuBisCO large chain family. Type I subfamily. In terms of assembly, heterohexadecamer of 8 large chains and 8 small chains; disulfide-linked. The disulfide link is formed within the large subunit homodimers. Mg(2+) serves as cofactor. In terms of processing, the disulfide bond which can form in the large chain dimeric partners within the hexadecamer appears to be associated with oxidative stress and protein turnover.

It localises to the plastid. It is found in the chloroplast. The enzyme catalyses 2 (2R)-3-phosphoglycerate + 2 H(+) = D-ribulose 1,5-bisphosphate + CO2 + H2O. It carries out the reaction D-ribulose 1,5-bisphosphate + O2 = 2-phosphoglycolate + (2R)-3-phosphoglycerate + 2 H(+). RuBisCO catalyzes two reactions: the carboxylation of D-ribulose 1,5-bisphosphate, the primary event in carbon dioxide fixation, as well as the oxidative fragmentation of the pentose substrate in the photorespiration process. Both reactions occur simultaneously and in competition at the same active site. The sequence is that of Ribulose bisphosphate carboxylase large chain from Callitriche heterophylla (Large water-starwort).